The following is a 623-amino-acid chain: Translation initiation factor IF-2 (623 aa).

Residues 1 to 18 (MTLNKKTNNENSSKTTPK) show a composition bias toward low complexity. Disordered stretches follow at residues 1–21 (MTLN…KLSK) and 92–115 (PQKE…KLQA). Residues 125-293 (KTPPIVTIMG…ILLFSEIQNL (169 aa)) enclose the tr-type G domain. Residues 134–141 (GHVDHGKT) form a G1 region. GTP is bound at residue 134–141 (GHVDHGKT). Residues 159-163 (GITQH) form a G2 region. Positions 180 to 183 (DTPG) are G3. GTP is bound by residues 180–184 (DTPGH) and 234–237 (NKVD). Positions 234-237 (NKVD) are G4. The interval 270–272 (SAL) is G5.

It belongs to the TRAFAC class translation factor GTPase superfamily. Classic translation factor GTPase family. IF-2 subfamily.

The protein localises to the cytoplasm. In terms of biological role, one of the essential components for the initiation of protein synthesis. Protects formylmethionyl-tRNA from spontaneous hydrolysis and promotes its binding to the 30S ribosomal subunits. Also involved in the hydrolysis of GTP during the formation of the 70S ribosomal complex. This chain is Translation initiation factor IF-2, found in Aster yellows witches'-broom phytoplasma (strain AYWB).